Consider the following 134-residue polypeptide: D-ribose pyranase (134 aa).

Residue histidine 20 is the Proton donor of the active site. Substrate contacts are provided by residues aspartate 28, histidine 99, and 123 to 125; that span reads YSN.

Belongs to the RbsD / FucU family. RbsD subfamily. As to quaternary structure, homodecamer.

The protein localises to the cytoplasm. It carries out the reaction beta-D-ribopyranose = beta-D-ribofuranose. Its pathway is carbohydrate metabolism; D-ribose degradation; D-ribose 5-phosphate from beta-D-ribopyranose: step 1/2. Its function is as follows. Catalyzes the interconversion of beta-pyran and beta-furan forms of D-ribose. The polypeptide is D-ribose pyranase (Staphylococcus aureus (strain USA300)).